Here is an 86-residue protein sequence, read N- to C-terminus: Mu-theraphotoxin-Cg2a 1 (86 aa).

An N-terminal signal peptide occupies residues 1-21 (MKVSVVITLAVLGIMFVWASA). Residues 22–50 (AELEERGSDQRDSPAWLKSMERIFQSEER) constitute a propeptide that is removed on maturation. 3 disulfides stabilise this stretch: Cys-52-Cys-66, Cys-59-Cys-71, and Cys-65-Cys-78. Phe-84 is subject to Phenylalanine amide.

It belongs to the neurotoxin 10 (Hwtx-1) family. 37 (Jztx-31) subfamily. In terms of tissue distribution, expressed by the venom gland.

It localises to the secreted. Its function is as follows. Inhibits both peak current and fast inactivation of voltage-gated sodium channels (Nav) channels. Inhibits the inactivation of Nav on DRG neurons (EC(50)=1.77 uM) and peak current of cardiac myocytes (IC(50)=0.90 uM). The polypeptide is Mu-theraphotoxin-Cg2a 1 (Chilobrachys guangxiensis (Chinese earth tiger tarantula)).